The sequence spans 200 residues: Recombination protein RecR (200 aa).

The segment at 59–74 (CGTCGSLDVTDPCAVC) adopts a C4-type zinc-finger fold. The Toprim domain occupies 82–177 (RLLCVVEEVG…PVTMLARGVP (96 aa)).

Belongs to the RecR family.

In terms of biological role, may play a role in DNA repair. It seems to be involved in an RecBC-independent recombinational process of DNA repair. It may act with RecF and RecO. This chain is Recombination protein RecR, found in Caulobacter vibrioides (strain ATCC 19089 / CIP 103742 / CB 15) (Caulobacter crescentus).